Reading from the N-terminus, the 350-residue chain is Anthranilate phosphoribosyltransferase (350 aa).

5-phospho-alpha-D-ribose 1-diphosphate-binding positions include G94, 97 to 98, T102, 104 to 107, 122 to 130, and S134; these read GD, NVST, and KHGNRSVSS. G94 serves as a coordination point for anthranilate. S106 is a Mg(2+) binding site. N125 serves as a coordination point for anthranilate. R180 contacts anthranilate. D239 and E240 together coordinate Mg(2+).

Belongs to the anthranilate phosphoribosyltransferase family. As to quaternary structure, homodimer. Requires Mg(2+) as cofactor.

The enzyme catalyses N-(5-phospho-beta-D-ribosyl)anthranilate + diphosphate = 5-phospho-alpha-D-ribose 1-diphosphate + anthranilate. It functions in the pathway amino-acid biosynthesis; L-tryptophan biosynthesis; L-tryptophan from chorismate: step 2/5. Catalyzes the transfer of the phosphoribosyl group of 5-phosphorylribose-1-pyrophosphate (PRPP) to anthranilate to yield N-(5'-phosphoribosyl)-anthranilate (PRA). This chain is Anthranilate phosphoribosyltransferase, found in Pelobacter propionicus (strain DSM 2379 / NBRC 103807 / OttBd1).